Here is a 331-residue protein sequence, read N- to C-terminus: Malate dehydrogenase (331 aa).

NAD(+) is bound at residue 14–20 (GAAGSIG). Residues Arg95 and Arg101 each coordinate substrate. NAD(+) contacts are provided by residues Asn108, Gln115, and 132–134 (VGN). Residues Asn134 and Arg165 each coordinate substrate. The Proton acceptor role is filled by His190.

It belongs to the LDH/MDH superfamily. MDH type 2 family.

It carries out the reaction (S)-malate + NAD(+) = oxaloacetate + NADH + H(+). Its function is as follows. Catalyzes the reversible oxidation of malate to oxaloacetate. The protein is Malate dehydrogenase of Rhodococcus opacus (strain B4).